A 126-amino-acid chain; its full sequence is Large ribosomal subunit protein bL20 (126 aa).

The protein belongs to the bacterial ribosomal protein bL20 family.

Its function is as follows. Binds directly to 23S ribosomal RNA and is necessary for the in vitro assembly process of the 50S ribosomal subunit. It is not involved in the protein synthesizing functions of that subunit. The sequence is that of Large ribosomal subunit protein bL20 from Parafrankia sp. (strain EAN1pec).